A 317-amino-acid chain; its full sequence is Metaxin-1 (317 aa).

Residues Lys-38, Lys-41, and Lys-78 each participate in a glycyl lysine isopeptide (Lys-Gly) (interchain with G-Cter in ubiquitin) cross-link. The chain crosses the membrane as a helical span at residues 164–184; the sequence is EELEKELYREARECLTLLSQR.

It belongs to the metaxin family. Interacts with MTX2/metaxin-2. Associates with the mitochondrial contact site and cristae organizing system (MICOS) complex, composed of at least MICOS10/MIC10, CHCHD3/MIC19, CHCHD6/MIC25, APOOL/MIC27, IMMT/MIC60, APOO/MIC23/MIC26 and QIL1/MIC13. This complex was also known under the names MINOS or MitOS complex. The MICOS complex associates with mitochondrial outer membrane proteins SAMM50, MTX1 and MTX2 (together described as components of the mitochondrial outer membrane sorting assembly machinery (SAM) complex) and DNAJC11, mitochondrial inner membrane protein TMEM11 and with HSPA9. The MICOS and SAM complexes together with DNAJC11 are part of a large protein complex spanning both membranes termed the mitochondrial intermembrane space bridging (MIB) complex. Interacts with ARMC1. In terms of processing, ubiquitinated by PRKN during mitophagy, leading to its degradation and enhancement of mitophagy. Deubiquitinated by USP30.

It is found in the mitochondrion outer membrane. In terms of biological role, involved in transport of proteins into the mitochondrion. Essential for embryonic development. The sequence is that of Metaxin-1 (MTX1) from Macaca fascicularis (Crab-eating macaque).